Reading from the N-terminus, the 398-residue chain is Organelle RRM domain-containing protein 1, chloroplastic (398 aa).

The N-terminal 88 residues, 1–88, are a transit peptide targeting the chloroplast; the sequence is MDTALPSVLI…RWVVVMDTPP (88 aa). A compositionally biased stretch (low complexity) spans 54 to 70; sequence LLASSSESPPAQLAAAS. The segment at 54 to 79 is disordered; that stretch reads LLASSSESPPAQLAAASTESQSRSSR. An RRM domain is found at 299–377; sequence KRLFVTGLSF…WMIVVDVAKT (79 aa).

The protein localises to the plastid. The protein resides in the chloroplast. In terms of biological role, involved in C-to-U editing of chloroplastic RNA. Functions as major chloroplastic editing factor. Controls a majority of the chloroplastic editing sites. The polypeptide is Organelle RRM domain-containing protein 1, chloroplastic (ORRM1) (Zea mays (Maize)).